The sequence spans 350 residues: Uroporphyrinogen decarboxylase (350 aa).

Substrate-binding positions include 23–27 (RQAGR), Asp72, Tyr149, Ser204, and His318.

Belongs to the uroporphyrinogen decarboxylase family. Homodimer.

The protein localises to the cytoplasm. It catalyses the reaction uroporphyrinogen III + 4 H(+) = coproporphyrinogen III + 4 CO2. The protein operates within porphyrin-containing compound metabolism; protoporphyrin-IX biosynthesis; coproporphyrinogen-III from 5-aminolevulinate: step 4/4. Its function is as follows. Catalyzes the decarboxylation of four acetate groups of uroporphyrinogen-III to yield coproporphyrinogen-III. The chain is Uroporphyrinogen decarboxylase from Carboxydothermus hydrogenoformans (strain ATCC BAA-161 / DSM 6008 / Z-2901).